The following is a 413-amino-acid chain: Serine hydroxymethyltransferase (413 aa).

(6S)-5,6,7,8-tetrahydrofolate contacts are provided by residues Leu117 and 121 to 123; that span reads GHL. Lys226 bears the N6-(pyridoxal phosphate)lysine mark. Residues Glu239 and 349–351 contribute to the (6S)-5,6,7,8-tetrahydrofolate site; that span reads SPF.

It belongs to the SHMT family. Homodimer. It depends on pyridoxal 5'-phosphate as a cofactor.

The protein resides in the cytoplasm. The enzyme catalyses (6R)-5,10-methylene-5,6,7,8-tetrahydrofolate + glycine + H2O = (6S)-5,6,7,8-tetrahydrofolate + L-serine. It participates in one-carbon metabolism; tetrahydrofolate interconversion. The protein operates within amino-acid biosynthesis; glycine biosynthesis; glycine from L-serine: step 1/1. Functionally, catalyzes the reversible interconversion of serine and glycine with tetrahydrofolate (THF) serving as the one-carbon carrier. This reaction serves as the major source of one-carbon groups required for the biosynthesis of purines, thymidylate, methionine, and other important biomolecules. Also exhibits THF-independent aldolase activity toward beta-hydroxyamino acids, producing glycine and aldehydes, via a retro-aldol mechanism. The chain is Serine hydroxymethyltransferase from Bacillus mycoides (strain KBAB4) (Bacillus weihenstephanensis).